A 105-amino-acid polypeptide reads, in one-letter code: Large ribosomal subunit protein uL24 (105 aa).

It belongs to the universal ribosomal protein uL24 family. Part of the 50S ribosomal subunit.

Functionally, one of two assembly initiator proteins, it binds directly to the 5'-end of the 23S rRNA, where it nucleates assembly of the 50S subunit. One of the proteins that surrounds the polypeptide exit tunnel on the outside of the subunit. This chain is Large ribosomal subunit protein uL24, found in Mycobacterium tuberculosis (strain CDC 1551 / Oshkosh).